Here is a 231-residue protein sequence, read N- to C-terminus: Class A basic helix-loop-helix protein 9 (231 aa).

The region spanning 61–113 (ARRMAANVRERKRILDYNEAFNALRRALQHDLGGKRLSKIATLRRAIHRITAL) is the bHLH domain. A disordered region spans residues 135–168 (QAAQGSSTGNSSFSVPRSAPSPIAPSLTRRDIAS). The span at 137 to 149 (AQGSSTGNSSFSV) shows a compositional bias: polar residues.

In terms of assembly, heterodimer. Efficient DNA binding requires dimerization with another bHLH protein. Interacts with TCF3, TCF4, and TCF12.

It localises to the nucleus. Functionally, transcription factor, which play a role in limb development. Is an essential player in the regulatory network governing transcription of genes implicated in limb morphogenesis. The sequence is that of Class A basic helix-loop-helix protein 9 (Bhlha9) from Mus musculus (Mouse).